Here is a 110-residue protein sequence, read N- to C-terminus: Phosphoribosyl-AMP cyclohydrolase (110 aa).

D80 contacts Mg(2+). Residue C81 coordinates Zn(2+). The Mg(2+) site is built by D82 and D84. Residues C97 and C104 each coordinate Zn(2+).

It belongs to the PRA-CH family. Homodimer. The cofactor is Mg(2+). Requires Zn(2+) as cofactor.

Its subcellular location is the cytoplasm. It catalyses the reaction 1-(5-phospho-beta-D-ribosyl)-5'-AMP + H2O = 1-(5-phospho-beta-D-ribosyl)-5-[(5-phospho-beta-D-ribosylamino)methylideneamino]imidazole-4-carboxamide. It participates in amino-acid biosynthesis; L-histidine biosynthesis; L-histidine from 5-phospho-alpha-D-ribose 1-diphosphate: step 3/9. In terms of biological role, catalyzes the hydrolysis of the adenine ring of phosphoribosyl-AMP. The protein is Phosphoribosyl-AMP cyclohydrolase of Clostridium botulinum (strain Okra / Type B1).